The sequence spans 476 residues: UDP-N-acetylmuramate--L-alanine ligase (476 aa).

Residue 125–131 participates in ATP binding; that stretch reads GTHGKTT.

The protein belongs to the MurCDEF family.

The protein resides in the cytoplasm. The catalysed reaction is UDP-N-acetyl-alpha-D-muramate + L-alanine + ATP = UDP-N-acetyl-alpha-D-muramoyl-L-alanine + ADP + phosphate + H(+). Its pathway is cell wall biogenesis; peptidoglycan biosynthesis. Cell wall formation. The polypeptide is UDP-N-acetylmuramate--L-alanine ligase (Histophilus somni (strain 129Pt) (Haemophilus somnus)).